The sequence spans 256 residues: Undecaprenyl-diphosphatase (256 aa).

Helical transmembrane passes span 39–59 (PTDA…AVLV), 77–97 (RTVI…YMLF), 101–121 (FTGG…TGLM), 135–155 (ISTK…LPGV), 176–196 (LMVS…LDCL), 206–226 (LPGA…MDVL), and 233–253 (VSFS…TALP).

Belongs to the UppP family.

It localises to the cell membrane. The catalysed reaction is di-trans,octa-cis-undecaprenyl diphosphate + H2O = di-trans,octa-cis-undecaprenyl phosphate + phosphate + H(+). Catalyzes the dephosphorylation of undecaprenyl diphosphate (UPP). The polypeptide is Undecaprenyl-diphosphatase (Methanothrix thermoacetophila (strain DSM 6194 / JCM 14653 / NBRC 101360 / PT) (Methanosaeta thermophila)).